The chain runs to 192 residues: Adenylate kinase (192 aa).

10 to 18 (GVPGVGGTT) contacts ATP.

This sequence belongs to the archaeal adenylate kinase family. As to quaternary structure, monomer.

The protein resides in the cytoplasm. It carries out the reaction AMP + ATP = 2 ADP. This Methanotorris igneus (Methanococcus igneus) protein is Adenylate kinase (adkA).